The primary structure comprises 255 residues: Glutamate racemase (255 aa).

Residues 7 to 8 (DS) and 39 to 40 (YG) contribute to the substrate site. Catalysis depends on cysteine 70, which acts as the Proton donor/acceptor. 71 to 72 (NT) lines the substrate pocket. Cysteine 181 serves as the catalytic Proton donor/acceptor. Residue 182–183 (TH) coordinates substrate.

This sequence belongs to the aspartate/glutamate racemases family.

It catalyses the reaction L-glutamate = D-glutamate. Its pathway is cell wall biogenesis; peptidoglycan biosynthesis. Functionally, provides the (R)-glutamate required for cell wall biosynthesis. This Helicobacter pylori (strain Shi470) protein is Glutamate racemase.